Reading from the N-terminus, the 317-residue chain is Vacuolar arginine/histidine antiporter YPQ2 (317 aa).

At 1 to 13 the chain is on the vacuolar side; sequence MSCSNGIWPTVSN. A PQ-loop 1 domain is found at 8–71; it reads WPTVSNLCGS…AKLTGQLLFQ (64 aa). Residues 14 to 34 form a helical membrane-spanning segment; the sequence is LCGSLSFFTSVISLFPQIIET. Residues 35–39 lie on the Cytoplasmic side of the membrane; sequence YRDKS. Residues 40-62 form a helical membrane-spanning segment; that stretch reads VDGLSPYFLLAWLCGDITSLIGA. Residues 63-71 are Vacuolar-facing; that stretch reads KLTGQLLFQ. The chain crosses the membrane as a helical span at residues 72–94; it reads ILLAIYFLLNDSFVCGQYYYYGV. Over 95 to 143 the chain is Cytoplasmic; that stretch reads LHENKLATVGHEPKPLLPELVENGELLREEEDMIQGGSSAESPRSSRRR. A Phosphoserine modification is found at Ser136. Residues 144–164 form a helical membrane-spanning segment; the sequence is SAITAALAIAHTISTASAYPL. The Vacuolar segment spans residues 165–184; it reads NVGSTQSQVGPPGDGKNSQL. Residues 185–205 traverse the membrane as a helical segment; the sequence is GTILSWIGASFYVGARIPQLI. The region spanning 185–247 is the PQ-loop 2 domain; that stretch reads GTILSWIGAS…SCRFLDNQNK (63 aa). Over 206-215 the chain is Cytoplasmic; sequence KNYNRKSTDG. The chain crosses the membrane as a helical span at residues 216 to 236; that stretch reads LSPFLFATTLLCNITYNLSIF. Residues 237–249 lie on the Vacuolar side of the membrane; sequence TSCRFLDNQNKRE. Residues 250–270 traverse the membrane as a helical segment; it reads FIVNELPFIFGSAGTIAFDLI. Residues 271–317 are Cytoplasmic-facing; the sequence is YFYQYYILYATDMQLRELERELYSPEEDSAAQLVTERTSLLSGETQT.

It belongs to the laat-1 family.

It localises to the vacuole membrane. The enzyme catalyses L-histidine(out) + L-arginine(in) = L-histidine(in) + L-arginine(out). Amino acid transporter that moves arginine across the vacuolar membrane. Active during nitrogen starvation when it exports stored vacuolar arginine to the cytosol, for use as a nitrogen source. Has been shown to function as an arginine/histidine antiporter when substrate is present on both sides of the membrane, but may also function as a uniporter. The chain is Vacuolar arginine/histidine antiporter YPQ2 (YPQ2) from Saccharomyces cerevisiae (strain ATCC 204508 / S288c) (Baker's yeast).